The primary structure comprises 452 residues: Photoreceptor ankyrin repeat protein (452 aa).

ANK repeat units lie at residues 94 to 123 (CRLG…SPEE), 130 to 160 (NGRT…DVNQ), 164 to 193 (GGDT…GLDL), and 223 to 257 (RGKT…QLSQ). Disordered stretches follow at residues 335-369 (LGTR…SPWV) and 405-427 (SKAS…QSLA). Pro residues predominate over residues 349–362 (APPPPLVPQSPPGS). Residues 406–424 (KASSSSHQCQPKPSPSGHQ) show a composition bias toward polar residues.

The protein localises to the cytoplasm. It localises to the cytosol. The protein resides in the nucleus. Acts as a transcriptional repressor for CRX-activated photoreceptor gene regulation. This is Photoreceptor ankyrin repeat protein from Homo sapiens (Human).